A 63-amino-acid polypeptide reads, in one-letter code: Small ribosomal subunit protein bS21 (63 aa).

Basic and acidic residues predominate over residues 40-52; that stretch reads KPSVKRKLKSEAA. The interval 40–63 is disordered; that stretch reads KPSVKRKLKSEAARKRKNKRGRRY. Over residues 53–63 the composition is skewed to basic residues; sequence RKRKNKRGRRY.

The protein belongs to the bacterial ribosomal protein bS21 family.

The sequence is that of Small ribosomal subunit protein bS21 from Limosilactobacillus reuteri (strain DSM 20016) (Lactobacillus reuteri).